Consider the following 248-residue polypeptide: uncharacterized protein (248 aa).

A signal peptide spans 1-23 (MLKKIVIGVTATAAFGIGAGALA).

It localises to the cell outer membrane. This is an uncharacterized protein from Coxiella burnetii (strain RSA 493 / Nine Mile phase I).